The primary structure comprises 245 residues: Putative protein phosphatase 2C-like protein 45 (245 aa).

In terms of domain architecture, PPM-type phosphatase spans 1–188; sequence MEDRFSTITN…DDISVMLIPL (188 aa).

Belongs to the PP2C family.

This is Putative protein phosphatase 2C-like protein 45 from Arabidopsis thaliana (Mouse-ear cress).